We begin with the raw amino-acid sequence, 418 residues long: UDP-N-acetylglucosamine 1-carboxyvinyltransferase (418 aa).

22–23 is a binding site for phosphoenolpyruvate; that stretch reads KN. Residue R91 coordinates UDP-N-acetyl-alpha-D-glucosamine. The Proton donor role is filled by C115. Residue C115 is modified to 2-(S-cysteinyl)pyruvic acid O-phosphothioketal. Positions 305 and 327 each coordinate UDP-N-acetyl-alpha-D-glucosamine.

This sequence belongs to the EPSP synthase family. MurA subfamily.

It is found in the cytoplasm. The enzyme catalyses phosphoenolpyruvate + UDP-N-acetyl-alpha-D-glucosamine = UDP-N-acetyl-3-O-(1-carboxyvinyl)-alpha-D-glucosamine + phosphate. It functions in the pathway cell wall biogenesis; peptidoglycan biosynthesis. Cell wall formation. Adds enolpyruvyl to UDP-N-acetylglucosamine. The polypeptide is UDP-N-acetylglucosamine 1-carboxyvinyltransferase (Aeromonas salmonicida (strain A449)).